A 341-amino-acid polypeptide reads, in one-letter code: ATPase GET3 (341 aa).

34–41 (KGGVGKTT) is an ATP binding site. Residue Asp63 is part of the active site. ATP contacts are provided by Glu245 and Asn272. Positions 283 and 286 each coordinate Zn(2+).

It belongs to the arsA ATPase family. In terms of assembly, homodimer.

It is found in the cytoplasm. The protein localises to the endoplasmic reticulum. Its function is as follows. ATPase required for the post-translational delivery of tail-anchored (TA) proteins to the endoplasmic reticulum. Recognizes and selectively binds the transmembrane domain of TA proteins in the cytosol. This complex then targets to the endoplasmic reticulum by membrane-bound receptors, where the tail-anchored protein is released for insertion. This process is regulated by ATP binding and hydrolysis. ATP binding drives the homodimer towards the closed dimer state, facilitating recognition of newly synthesized TA membrane proteins. ATP hydrolysis is required for insertion. Subsequently, the homodimer reverts towards the open dimer state, lowering its affinity for the membrane-bound receptor, and returning it to the cytosol to initiate a new round of targeting. This is ATPase GET3 from Ajellomyces capsulatus (strain H143) (Darling's disease fungus).